Consider the following 426-residue polypeptide: Amino acid transporter AVT1H (426 aa).

Helical transmembrane passes span 34–54 (SFLH…QLSM), 55–75 (PYAV…FGIL), 110–130 (LIVC…YTIS), 148–168 (HFPA…SLWI), 182–202 (ILMS…GGVI), 215–235 (IPTV…FPNL), 248–268 (VSIV…ITGA), 292–312 (IALW…FAPL), 340–360 (LLLV…VLSL), 363–383 (SLVS…KICW), and 392–412 (AANL…SFES).

Belongs to the amino acid/polyamine transporter 2 family. Amino acid/auxin permease (AAAP) (TC 2.A.18.5) subfamily.

Its subcellular location is the membrane. This chain is Amino acid transporter AVT1H, found in Arabidopsis thaliana (Mouse-ear cress).